A 426-amino-acid chain; its full sequence is UPF0164 protein TP_0548 (426 aa).

The first 37 residues, 1–37 (MISCSVRRRPRWEPQVGAAFLAFALLPVLASGRGMQA), serve as a signal peptide directing secretion.

The protein belongs to the UPF0164 family.

This is UPF0164 protein TP_0548 from Treponema pallidum (strain Nichols).